Consider the following 490-residue polypeptide: Scarecrow-like transcription factor PAT1 (490 aa).

A GRAS domain is found at Thr-110 to Lys-490. The interval Arg-117 to Ile-178 is leucine repeat I (LRI). The interval Met-197–Gly-262 is VHIID. The VHIID motif lies at Val-228–Asp-232. Residues Ile-278–Asn-310 are leucine repeat II (LRII). The PFYRE stretch occupies residues Leu-319–Asn-413. The interval Ala-416–Lys-490 is SAW.

It belongs to the GRAS family.

The protein localises to the cytoplasm. Its function is as follows. Probable transcription factor involved in phytochrome A (phyA) signal transduction. This chain is Scarecrow-like transcription factor PAT1 (PAT1), found in Arabidopsis thaliana (Mouse-ear cress).